The sequence spans 569 residues: Urease subunit alpha (569 aa).

The region spanning 131 to 569 (GGFDSHIHFI…LPMAQRYFLF (439 aa)) is the Urease domain. Residues histidine 136, histidine 138, and lysine 219 each coordinate Ni(2+). Residue lysine 219 is modified to N6-carboxylysine. Histidine 221 contributes to the substrate binding site. 2 residues coordinate Ni(2+): histidine 248 and histidine 274. Histidine 322 (proton donor) is an active-site residue. Ni(2+) is bound at residue aspartate 362.

It belongs to the metallo-dependent hydrolases superfamily. Urease alpha subunit family. As to quaternary structure, heterotrimer of UreA (gamma), UreB (beta) and UreC (alpha) subunits. Three heterotrimers associate to form the active enzyme. Ni cation is required as a cofactor. Post-translationally, carboxylation allows a single lysine to coordinate two nickel ions.

It localises to the cytoplasm. The enzyme catalyses urea + 2 H2O + H(+) = hydrogencarbonate + 2 NH4(+). Its pathway is nitrogen metabolism; urea degradation; CO(2) and NH(3) from urea (urease route): step 1/1. This Roseobacter denitrificans (strain ATCC 33942 / OCh 114) (Erythrobacter sp. (strain OCh 114)) protein is Urease subunit alpha.